The chain runs to 63 residues: Large ribosomal subunit protein uL30 (63 aa).

The protein belongs to the universal ribosomal protein uL30 family. Part of the 50S ribosomal subunit.

The sequence is that of Large ribosomal subunit protein uL30 from Rickettsia peacockii (strain Rustic).